The following is a 567-amino-acid chain: Urease subunit alpha (567 aa).

Residues 129-567 (GGIDAHIHFI…LPLAQLYCLF (439 aa)) form the Urease domain. Ni(2+) is bound by residues histidine 134, histidine 136, and lysine 217. The residue at position 217 (lysine 217) is an N6-carboxylysine. Histidine 219 contributes to the substrate binding site. Histidine 246 and histidine 272 together coordinate Ni(2+). Histidine 320 acts as the Proton donor in catalysis. Position 360 (aspartate 360) interacts with Ni(2+).

Belongs to the metallo-dependent hydrolases superfamily. Urease alpha subunit family. In terms of assembly, heterotrimer of UreA (gamma), UreB (beta) and UreC (alpha) subunits. Three heterotrimers associate to form the active enzyme. Requires Ni cation as cofactor. Post-translationally, carboxylation allows a single lysine to coordinate two nickel ions.

It localises to the cytoplasm. The enzyme catalyses urea + 2 H2O + H(+) = hydrogencarbonate + 2 NH4(+). It functions in the pathway nitrogen metabolism; urea degradation; CO(2) and NH(3) from urea (urease route): step 1/1. This is Urease subunit alpha from Alteromonas mediterranea (strain DSM 17117 / CIP 110805 / LMG 28347 / Deep ecotype).